Here is a 316-residue protein sequence, read N- to C-terminus: L-lactate dehydrogenase 3 (316 aa).

The NAD(+) site is built by V16, D37, R42, and Y68. Residue R91 participates in substrate binding. Residues S104, 121-123 (ASN), and T146 each bind NAD(+). Substrate is bound at residue 123 to 126 (NPVD). 151-154 (DSSR) is a substrate binding site. Beta-D-fructose 1,6-bisphosphate is bound by residues R156 and H171. The active-site Proton acceptor is H178. T233 provides a ligand contact to substrate.

This sequence belongs to the LDH/MDH superfamily. LDH family. As to quaternary structure, homotetramer.

The protein localises to the cytoplasm. The enzyme catalyses (S)-lactate + NAD(+) = pyruvate + NADH + H(+). It participates in fermentation; pyruvate fermentation to lactate; (S)-lactate from pyruvate: step 1/1. Its activity is regulated as follows. Allosterically activated by fructose 1,6-bisphosphate (FBP). Catalyzes the conversion of lactate to pyruvate. The polypeptide is L-lactate dehydrogenase 3 (Bacillus cereus (strain ATCC 10987 / NRS 248)).